We begin with the raw amino-acid sequence, 238 residues long: Ribonuclease PH (238 aa).

Phosphate contacts are provided by residues Arg86 and 124-126 (GTR).

It belongs to the RNase PH family. In terms of assembly, homohexameric ring arranged as a trimer of dimers.

It carries out the reaction tRNA(n+1) + phosphate = tRNA(n) + a ribonucleoside 5'-diphosphate. Functionally, phosphorolytic 3'-5' exoribonuclease that plays an important role in tRNA 3'-end maturation. Removes nucleotide residues following the 3'-CCA terminus of tRNAs; can also add nucleotides to the ends of RNA molecules by using nucleoside diphosphates as substrates, but this may not be physiologically important. Probably plays a role in initiation of 16S rRNA degradation (leading to ribosome degradation) during starvation. In Rhizorhabdus wittichii (strain DSM 6014 / CCUG 31198 / JCM 15750 / NBRC 105917 / EY 4224 / RW1) (Sphingomonas wittichii), this protein is Ribonuclease PH.